The primary structure comprises 295 residues: 33 kDa chaperonin (295 aa).

2 cysteine pairs are disulfide-bonded: Cys236–Cys238 and Cys269–Cys272.

The protein belongs to the HSP33 family. Under oxidizing conditions two disulfide bonds are formed involving the reactive cysteines. Under reducing conditions zinc is bound to the reactive cysteines and the protein is inactive.

The protein resides in the cytoplasm. Its function is as follows. Redox regulated molecular chaperone. Protects both thermally unfolding and oxidatively damaged proteins from irreversible aggregation. Plays an important role in the bacterial defense system toward oxidative stress. This is 33 kDa chaperonin from Citrifermentans bemidjiense (strain ATCC BAA-1014 / DSM 16622 / JCM 12645 / Bem) (Geobacter bemidjiensis).